The sequence spans 364 residues: Aminomethyltransferase (364 aa).

The protein belongs to the GcvT family. As to quaternary structure, the glycine cleavage system is composed of four proteins: P, T, L and H.

It catalyses the reaction N(6)-[(R)-S(8)-aminomethyldihydrolipoyl]-L-lysyl-[protein] + (6S)-5,6,7,8-tetrahydrofolate = N(6)-[(R)-dihydrolipoyl]-L-lysyl-[protein] + (6R)-5,10-methylene-5,6,7,8-tetrahydrofolate + NH4(+). The glycine cleavage system catalyzes the degradation of glycine. The polypeptide is Aminomethyltransferase (Anoxybacillus flavithermus (strain DSM 21510 / WK1)).